The chain runs to 403 residues: F-box only protein 22 (403 aa).

Met1 carries the post-translational modification N-acetylmethionine. The 53-residue stretch at 19 to 71 folds into the F-box domain; it reads STFVLSNLAEVVERVLTFLPAKALLRVACVCRLWRECVRRVLRTHRSVTWISA. Position 128 is a phosphoserine (Ser128). Residue Lys194 is modified to N6-acetyllysine.

Directly interacts with SKP1 and CUL1.

The protein localises to the cytoplasm. It localises to the myofibril. It is found in the sarcomere. The protein resides in the z line. Substrate-recognition component of the SCF (SKP1-CUL1-F-box protein)-type E3 ubiquitin ligase complex. Promotes the proteasome-dependent degradation of key sarcomeric proteins, such as alpha-actinin (ACTN2) and filamin-C (FLNC), essential for maintenance of normal contractile function. In Pongo abelii (Sumatran orangutan), this protein is F-box only protein 22 (FBXO22).